The following is a 2293-amino-acid chain: G-protein coupled receptor 179 (2293 aa).

The first 27 residues, 1–27 (MGARAVVISSLAWGLLSCCFLCSGALG), serve as a signal peptide directing secretion. The interval 62 to 245 (FLYSGDVQRL…CHEGQLRPGW (184 aa)) is cache-like region. A glycan (N-linked (GlcNAc...) asparagine) is linked at N75. C76 and C236 are joined by a disulfide. The N-linked (GlcNAc...) asparagine glycan is linked to N298. 7 consecutive transmembrane segments (helical) span residues 383 to 403 (AVLA…LVAY), 416 to 436 (IVLL…VFIL), 445 to 465 (CVAL…TIIL), 494 to 514 (LGQL…GALE), 544 to 564 (YIMV…CYAT), 585 to 602 (LLLS…VPSL), and 608 to 628 (LLLF…LIFI). Residues C445 and C537 are joined by a disulfide bond. N661 carries N-linked (GlcNAc...) asparagine glycosylation. A disordered region spans residues 733-812 (QHSRDSGSLG…GRESLADGPP (80 aa)). The segment covering 738 to 759 (SGSLGLGSLPGSSRRRLLSSSL) has biased composition (low complexity). The span at 773 to 782 (STYDHHREHN) shows a compositional bias: basic and acidic residues. Residue N823 is glycosylated (N-linked (GlcNAc...) asparagine). Disordered regions lie at residues 872-935 (EERK…HPPI), 1046-1235 (GTGE…NPAL), 1275-1294 (ERTE…LSRS), 1326-1345 (EAVC…QLVH), 1388-1411 (GTST…ATFW), 1479-1560 (ELAG…HGGS), 1578-1770 (ATLS…VCPW), 1792-1828 (TVGK…TSKG), 1844-1882 (WKPP…KGEL), 1924-2051 (SSSH…GSEK), and 2212-2293 (FLPE…WDCE). Polar residues predominate over residues 1080–1089 (LKTPLQQGSV). Basic and acidic residues-rich tracts occupy residues 1105-1123 (TYKE…KGKP), 1173-1186 (CQKE…DRNK), and 1275-1286 (ERTEGGSLEKKP). Composition is skewed to basic and acidic residues over residues 1546–1555 (ASSKAGEKLL) and 1597–1632 (RTSE…RIQK). Positions 1644–1663 (PGSTPQRDTEKAQASLQRQG) are enriched in polar residues. Composition is skewed to basic and acidic residues over residues 1682 to 1698 (GEER…RPND) and 1717 to 1728 (KKSERLGSEKEV). A compositionally biased stretch (polar residues) spans 1737–1747 (PGDSSQQPDTP). Basic and acidic residues-rich tracts occupy residues 1748 to 1761 (NTEK…EHGS), 1796 to 1813 (GLER…RQNL), and 1872 to 1882 (ASDRASEKGEL). Over residues 1937-1948 (RVSSQPLVSTGD) the composition is skewed to polar residues. Residues 1979–2007 (TETEMSRQDEKEKSQEEKERAPETRDHEG) show a composition bias toward basic and acidic residues. Residues 2283–2293 (SPPPDYPWDCE) are compositionally biased toward pro residues.

The protein belongs to the G-protein coupled receptor 3 family. As to quaternary structure, homodimer. Associates with the R7 group RGS-GNB5 complexes, composed of an R7 group RGS subunit (RGS6, RGS7, RGS9 or RGS11) and GNB5, promoting their localization to the cell membrane and regulating the GTPase activator activity of R7 RGS proteins. Interacts with TRPM1. Interacts with GRM6. Interacts with EGFLAM; transsynaptic interaction is required for synaptic organization of photoreceptor cells.

The protein resides in the cell membrane. The protein localises to the postsynaptic cell membrane. It is found in the cell projection. It localises to the dendrite. In terms of biological role, orphan receptor involved in vision. Required for signal transduction through retinal depolarizing bipolar cells. Acts as an atypical G-protein coupled receptor that recruits and regulates the R7 group RGS-GNB5 complexes instead of activating G proteins: promotes the GTPase activator activity of R7 RGS proteins, increasing the GTPase activity of G protein alpha subunits, thereby driving them into their inactive GDP-bound form. Associates with components of metabotropic signaling cascade in retina ON-bipolar neurons, such as TRPM1 and GRM6: may control the ability of the GRM6 cascade to gate TRPM1. The protein is G-protein coupled receptor 179 of Mus musculus (Mouse).